The primary structure comprises 380 residues: MKKKSVWIKADEGGWEEQKERITTGLESGADCVLVNPGDVEKVRELGNITVAAFARDNKSGADIVVVGKRGEGDGTKPLPQEIPGSFDVNAATLLTDKGVTVGGYVVIKDRSYERFAAEMGKICDYLLVTGTDWKVIPLENLIADLQREKVKIIFGVKSAEEARLAFQTLETGADGVLLDSGNPQEIKDTIKAARELESESTELESAVVTRVEPLGMGDRVCVDTCNLMQRGEGMLIGSQASGMFLVNSESDDSPYVAARPFRVNAGAVHSYIKIGDKTRYLSELQAGDSVTIIDSRGKQREGIVGRIKIESRPLMLIEAKAGDRTLTAILQNAETIKLVGKGGTPISVAKLKKGDEVLVRLEEGARHFGKKIEETIIEK.

This sequence belongs to the archaeal-type DHQ synthase family.

It carries out the reaction 2-amino-2,3,7-trideoxy-D-lyxo-hept-6-ulosonate + NAD(+) + H2O = 3-dehydroquinate + NH4(+) + NADH + H(+). Its function is as follows. Catalyzes the oxidative deamination and cyclization of 2-amino-3,7-dideoxy-D-threo-hept-6-ulosonic acid (ADH) to yield 3-dehydroquinate (DHQ), which is fed into the canonical shikimic pathway of aromatic amino acid biosynthesis. The polypeptide is 3-dehydroquinate synthase (Methanosarcina mazei (strain ATCC BAA-159 / DSM 3647 / Goe1 / Go1 / JCM 11833 / OCM 88) (Methanosarcina frisia)).